We begin with the raw amino-acid sequence, 96 residues long: Large ribosomal subunit protein bL28 (96 aa).

Belongs to the bacterial ribosomal protein bL28 family.

This is Large ribosomal subunit protein bL28 from Agrobacterium fabrum (strain C58 / ATCC 33970) (Agrobacterium tumefaciens (strain C58)).